A 138-amino-acid chain; its full sequence is Large ribosomal subunit protein uL16 (138 aa).

Residues 1–13 (MLQPSRRKYRKEQ) are compositionally biased toward basic residues. Positions 1–22 (MLQPSRRKYRKEQKGRNTGLAT) are disordered.

The protein belongs to the universal ribosomal protein uL16 family. As to quaternary structure, part of the 50S ribosomal subunit.

In terms of biological role, binds 23S rRNA and is also seen to make contacts with the A and possibly P site tRNAs. The chain is Large ribosomal subunit protein uL16 from Bordetella petrii (strain ATCC BAA-461 / DSM 12804 / CCUG 43448).